Consider the following 142-residue polypeptide: Large ribosomal subunit protein uL11 (142 aa).

This sequence belongs to the universal ribosomal protein uL11 family. In terms of assembly, part of the ribosomal stalk of the 50S ribosomal subunit. Interacts with L10 and the large rRNA to form the base of the stalk. L10 forms an elongated spine to which L12 dimers bind in a sequential fashion forming a multimeric L10(L12)X complex. Post-translationally, one or more lysine residues are methylated.

In terms of biological role, forms part of the ribosomal stalk which helps the ribosome interact with GTP-bound translation factors. The sequence is that of Large ribosomal subunit protein uL11 from Brucella anthropi (strain ATCC 49188 / DSM 6882 / CCUG 24695 / JCM 21032 / LMG 3331 / NBRC 15819 / NCTC 12168 / Alc 37) (Ochrobactrum anthropi).